A 1433-amino-acid chain; its full sequence is Gag-Pol polyprotein (1433 aa).

Gly2 carries N-myristoyl glycine; by host lipidation. The tract at residues 7 to 31 (VLTGGKLDAWEKIRLRPGGRKSYKI) is interaction with Gp41. The interval 8 to 43 (LTGGKLDAWEKIRLRPGGRKSYKIKHLVWASRELER) is interaction with host CALM1. An interaction with host AP3D1 region spans residues 12–19 (KLDAWEKI). Residues 14-33 (DAWEKIRLRPGGRKSYKIKH) are interaction with membrane phosphatidylinositol 4,5-bisphosphate and RNA. Residues 16-22 (WEKIRLR) carry the Nuclear export signal motif. A Nuclear localization signal motif is present at residues 26–32 (RKSYKIK). The interval 73 to 77 (EEIKS) is interaction with membrane phosphatidylinositol 4,5-bisphosphate. Tyr132 is modified (phosphotyrosine; by host). Residues 189-227 (NTVGGHQAAMQMLKDTINEEAAEWDRMHPQQAGPFPPGQ) are interaction with human PPIA/CYPA and NUP153. Residues 277 to 363 (YSPVSILDIR…GGPSHKARVL (87 aa)) form a dimerization/Multimerization of capsid protein p24 region. 2 consecutive CCHC-type zinc fingers follow at residues 391 to 408 (IKCFNCGKEGHLARNCRA) and 412 to 429 (KGCWKCGKEGHQMKDCTE). The segment covering 445 to 455 (EAREFSSEQDR) has biased composition (basic and acidic residues). Residues 445–481 (EAREFSSEQDRTNSPTCRKPRVRRGDSPLPEAGDEGK) form a disordered region. A dimerization of protease region spans residues 487 to 491 (PQITL). The 70-residue stretch at 506 to 575 (IEALLDTGAD…TPINIIGRNM (70 aa)) folds into the Peptidase A2 domain. Asp511 (for protease activity; shared with dimeric partner) is an active-site residue. 2 dimerization of protease regions span residues 535–541 (GIGGFIK) and 574–586 (NMLTQIGCTLNFP). Residues 629–819 (EGKISKIGPE…PPFLWMGYEL (191 aa)) enclose the Reverse transcriptase domain. The Mg(2+) site is built by Asp695, Asp770, and Asp771. The RT 'primer grip' stretch occupies residues 812 to 820 (FLWMGYELH). The short motif at 983 to 999 (WEIWWTDYWQATWIPEW) is the Tryptophan repeat motif element. Positions 1019–1142 (IPGAETYYVD…VDKLVSSGIR (124 aa)) constitute an RNase H type-1 domain. The Mg(2+) site is built by Asp1028, Glu1063, Asp1083, and Asp1134. The segment at 1148–1189 (DGIDKAQEEHERYHNNWRAMASDFNLPPIVAKEIVASCDKCQ) adopts an Integrase-type zinc-finger fold. His1157, His1161, Cys1185, and Cys1188 together coordinate Zn(2+). The region spanning 1199–1349 (VDCSPGIWQL…SAGERIIDII (151 aa)) is the Integrase catalytic domain. Mg(2+) contacts are provided by Asp1209, Asp1261, and Glu1297. Residues 1368 to 1415 (FRVYYRDSRDPVWKGPAKLLWKGEGAVVIQDNNEIKVVPRRKAKIIRD) constitute a DNA-binding region (integrase-type).

As to quaternary structure, homotrimer; further assembles as hexamers of trimers. Interacts with gp41 (via C-terminus). Interacts with host CALM1; this interaction induces a conformational change in the Matrix protein, triggering exposure of the myristate group. Interacts with host AP3D1; this interaction allows the polyprotein trafficking to multivesicular bodies during virus assembly. Part of the pre-integration complex (PIC) which is composed of viral genome, matrix protein, Vpr and integrase. Homodimer; the homodimer further multimerizes as homohexamers or homopentamers. Interacts with human PPIA/CYPA; This interaction stabilizes the capsid. Interacts with human NUP153. Interacts with host PDZD8; this interaction stabilizes the capsid. Interacts with monkey TRIM5; this interaction destabilizes the capsid. In terms of assembly, homodimer, whose active site consists of two apposed aspartic acid residues. As to quaternary structure, heterodimer of p66 RT and p51 RT (RT p66/p51). Heterodimerization of RT is essential for DNA polymerase activity. The overall folding of the subdomains is similar in p66 RT and p51 RT but the spatial arrangements of the subdomains are dramatically different. Homotetramer; may further associate as a homohexadecamer. Part of the pre-integration complex (PIC) which is composed of viral genome, matrix protein, Vpr and integrase. Interacts with human SMARCB1/INI1 and human PSIP1/LEDGF isoform 1. Interacts with human KPNA3; this interaction might play a role in nuclear import of the pre-integration complex. Interacts with human NUP153; this interaction might play a role in nuclear import of the pre-integration complex. Mg(2+) serves as cofactor. In terms of processing, specific enzymatic cleavages by the viral protease yield mature proteins. The protease is released by autocatalytic cleavage. The polyprotein is cleaved during and after budding, this process is termed maturation. Proteolytic cleavage of p66 RT removes the RNase H domain to yield the p51 RT subunit. Nucleocapsid protein p7 might be further cleaved after virus entry. Tyrosine phosphorylated presumably in the virion by a host kinase. Phosphorylation is apparently not a major regulator of membrane association. Post-translationally, phosphorylated possibly by host MAPK1; this phosphorylation is necessary for Pin1-mediated virion uncoating. In terms of processing, methylated by host PRMT6, impairing its function by reducing RNA annealing and the initiation of reverse transcription.

Its subcellular location is the host cell membrane. It is found in the host endosome. It localises to the host multivesicular body. The protein localises to the virion membrane. The protein resides in the host nucleus. Its subcellular location is the host cytoplasm. It is found in the virion. It catalyses the reaction Specific for a P1 residue that is hydrophobic, and P1' variable, but often Pro.. The enzyme catalyses Endohydrolysis of RNA in RNA/DNA hybrids. Three different cleavage modes: 1. sequence-specific internal cleavage of RNA. Human immunodeficiency virus type 1 and Moloney murine leukemia virus enzymes prefer to cleave the RNA strand one nucleotide away from the RNA-DNA junction. 2. RNA 5'-end directed cleavage 13-19 nucleotides from the RNA end. 3. DNA 3'-end directed cleavage 15-20 nucleotides away from the primer terminus.. The catalysed reaction is 3'-end directed exonucleolytic cleavage of viral RNA-DNA hybrid.. It carries out the reaction DNA(n) + a 2'-deoxyribonucleoside 5'-triphosphate = DNA(n+1) + diphosphate. Protease: The viral protease is inhibited by many synthetic protease inhibitors (PIs), such as amprenavir, atazanavir, indinavir, loprinavir, nelfinavir, ritonavir and saquinavir. Use of protease inhibitors in tritherapy regimens permit more ambitious therapeutic strategies. Reverse transcriptase/ribonuclease H: RT can be inhibited either by nucleoside RT inhibitors (NRTIs) or by non nucleoside RT inhibitors (NNRTIs). NRTIs act as chain terminators, whereas NNRTIs inhibit DNA polymerization by binding a small hydrophobic pocket near the RT active site and inducing an allosteric change in this region. Classical NRTIs are abacavir, adefovir (PMEA), didanosine (ddI), lamivudine (3TC), stavudine (d4T), tenofovir (PMPA), zalcitabine (ddC), and zidovudine (AZT). Classical NNRTIs are atevirdine (BHAP U-87201E), delavirdine, efavirenz (DMP-266), emivirine (I-EBU), and nevirapine (BI-RG-587). The tritherapies used as a basic effective treatment of AIDS associate two NRTIs and one NNRTI. In terms of biological role, mediates, with Gag polyprotein, the essential events in virion assembly, including binding the plasma membrane, making the protein-protein interactions necessary to create spherical particles, recruiting the viral Env proteins, and packaging the genomic RNA via direct interactions with the RNA packaging sequence (Psi). Gag-Pol polyprotein may regulate its own translation, by the binding genomic RNA in the 5'-UTR. At low concentration, the polyprotein would promote translation, whereas at high concentration, the polyprotein would encapsidate genomic RNA and then shut off translation. Targets the polyprotein to the plasma membrane via a multipartite membrane-binding signal, that includes its myristoylated N-terminus. Matrix protein is part of the pre-integration complex. Implicated in the release from host cell mediated by Vpu. Binds to RNA. Functionally, forms the conical core that encapsulates the genomic RNA-nucleocapsid complex in the virion. Most core are conical, with only 7% tubular. The core is constituted by capsid protein hexamer subunits. The core is disassembled soon after virion entry. Host restriction factors such as TRIM5-alpha or TRIMCyp bind retroviral capsids and cause premature capsid disassembly, leading to blocks in reverse transcription. Capsid restriction by TRIM5 is one of the factors which restricts HIV-1 to the human species. Host PIN1 apparently facilitates the virion uncoating. On the other hand, interactions with PDZD8 or CYPA stabilize the capsid. Its function is as follows. Encapsulates and protects viral dimeric unspliced genomic RNA (gRNA). Binds these RNAs through its zinc fingers. Acts as a nucleic acid chaperone which is involved in rearangement of nucleic acid secondary structure during gRNA retrotranscription. Also facilitates template switch leading to recombination. As part of the polyprotein, participates in gRNA dimerization, packaging, tRNA incorporation and virion assembly. In terms of biological role, aspartyl protease that mediates proteolytic cleavages of Gag and Gag-Pol polyproteins during or shortly after the release of the virion from the plasma membrane. Cleavages take place as an ordered, step-wise cascade to yield mature proteins. This process is called maturation. Displays maximal activity during the budding process just prior to particle release from the cell. Also cleaves Nef and Vif, probably concomitantly with viral structural proteins on maturation of virus particles. Hydrolyzes host EIF4GI and PABP1 in order to shut off the capped cellular mRNA translation. The resulting inhibition of cellular protein synthesis serves to ensure maximal viral gene expression and to evade host immune response. Also mediates cleavage of host YTHDF3. Mediates cleavage of host CARD8, thereby activating the CARD8 inflammasome, leading to the clearance of latent HIV-1 in patient CD4(+) T-cells after viral reactivation; in contrast, HIV-1 can evade CARD8-sensing when its protease remains inactive in infected cells prior to viral budding. Multifunctional enzyme that converts the viral RNA genome into dsDNA in the cytoplasm, shortly after virus entry into the cell. This enzyme displays a DNA polymerase activity that can copy either DNA or RNA templates, and a ribonuclease H (RNase H) activity that cleaves the RNA strand of RNA-DNA heteroduplexes in a partially processive 3' to 5' endonucleasic mode. Conversion of viral genomic RNA into dsDNA requires many steps. A tRNA(3)-Lys binds to the primer-binding site (PBS) situated at the 5'-end of the viral RNA. RT uses the 3' end of the tRNA primer to perform a short round of RNA-dependent minus-strand DNA synthesis. The reading proceeds through the U5 region and ends after the repeated (R) region which is present at both ends of viral RNA. The portion of the RNA-DNA heteroduplex is digested by the RNase H, resulting in a ssDNA product attached to the tRNA primer. This ssDNA/tRNA hybridizes with the identical R region situated at the 3' end of viral RNA. This template exchange, known as minus-strand DNA strong stop transfer, can be either intra- or intermolecular. RT uses the 3' end of this newly synthesized short ssDNA to perform the RNA-dependent minus-strand DNA synthesis of the whole template. RNase H digests the RNA template except for two polypurine tracts (PPTs) situated at the 5'-end and near the center of the genome. It is not clear if both polymerase and RNase H activities are simultaneous. RNase H probably can proceed both in a polymerase-dependent (RNA cut into small fragments by the same RT performing DNA synthesis) and a polymerase-independent mode (cleavage of remaining RNA fragments by free RTs). Secondly, RT performs DNA-directed plus-strand DNA synthesis using the PPTs that have not been removed by RNase H as primers. PPTs and tRNA primers are then removed by RNase H. The 3' and 5' ssDNA PBS regions hybridize to form a circular dsDNA intermediate. Strand displacement synthesis by RT to the PBS and PPT ends produces a blunt ended, linear dsDNA copy of the viral genome that includes long terminal repeats (LTRs) at both ends. Functionally, catalyzes viral DNA integration into the host chromosome, by performing a series of DNA cutting and joining reactions. This enzyme activity takes place after virion entry into a cell and reverse transcription of the RNA genome in dsDNA. The first step in the integration process is 3' processing. This step requires a complex comprising the viral genome, matrix protein, Vpr and integrase. This complex is called the pre-integration complex (PIC). The integrase protein removes 2 nucleotides from each 3' end of the viral DNA, leaving recessed CA OH's at the 3' ends. In the second step, the PIC enters cell nucleus. This process is mediated through integrase and Vpr proteins, and allows the virus to infect a non dividing cell. This ability to enter the nucleus is specific of lentiviruses, other retroviruses cannot and rely on cell division to access cell chromosomes. In the third step, termed strand transfer, the integrase protein joins the previously processed 3' ends to the 5' ends of strands of target cellular DNA at the site of integration. The 5'-ends are produced by integrase-catalyzed staggered cuts, 5 bp apart. A Y-shaped, gapped, recombination intermediate results, with the 5'-ends of the viral DNA strands and the 3' ends of target DNA strands remaining unjoined, flanking a gap of 5 bp. The last step is viral DNA integration into host chromosome. This involves host DNA repair synthesis in which the 5 bp gaps between the unjoined strands are filled in and then ligated. Since this process occurs at both cuts flanking the HIV genome, a 5 bp duplication of host DNA is produced at the ends of HIV-1 integration. Alternatively, Integrase may catalyze the excision of viral DNA just after strand transfer, this is termed disintegration. The polypeptide is Gag-Pol polyprotein (gag-pol) (Human immunodeficiency virus type 1 group M subtype G (isolate SE6165) (HIV-1)).